The primary structure comprises 249 residues: Enolase-phosphatase E1 (249 aa).

The protein belongs to the HAD-like hydrolase superfamily. MasA/MtnC family. Monomer. Requires Mg(2+) as cofactor.

It catalyses the reaction 5-methylsulfanyl-2,3-dioxopentyl phosphate + H2O = 1,2-dihydroxy-5-(methylsulfanyl)pent-1-en-3-one + phosphate. It participates in amino-acid biosynthesis; L-methionine biosynthesis via salvage pathway; L-methionine from S-methyl-5-thio-alpha-D-ribose 1-phosphate: step 3/6. Its pathway is amino-acid biosynthesis; L-methionine biosynthesis via salvage pathway; L-methionine from S-methyl-5-thio-alpha-D-ribose 1-phosphate: step 4/6. In terms of biological role, bifunctional enzyme that catalyzes the enolization of 2,3-diketo-5-methylthiopentyl-1-phosphate (DK-MTP-1-P) into the intermediate 2-hydroxy-3-keto-5-methylthiopentenyl-1-phosphate (HK-MTPenyl-1-P), which is then dephosphorylated to form the acireductone 1,2-dihydroxy-3-keto-5-methylthiopentene (DHK-MTPene). The polypeptide is Enolase-phosphatase E1 (Synechococcus sp. (strain RCC307)).